Here is a 93-residue protein sequence, read N- to C-terminus: UPF0728 protein C10orf53 homolog (93 aa).

The protein belongs to the UPF0728 family.

The sequence is that of UPF0728 protein C10orf53 homolog from Bos taurus (Bovine).